Here is a 620-residue protein sequence, read N- to C-terminus: 1-deoxy-D-xylulose-5-phosphate synthase (620 aa).

Residues His-80 and 121-123 (GHS) contribute to the thiamine diphosphate site. Mg(2+) is bound at residue Asp-152. Thiamine diphosphate contacts are provided by residues 153–154 (GA), Asn-181, Tyr-288, and Glu-370. Residue Asn-181 coordinates Mg(2+).

The protein belongs to the transketolase family. DXPS subfamily. In terms of assembly, homodimer. Mg(2+) serves as cofactor. The cofactor is thiamine diphosphate.

It catalyses the reaction D-glyceraldehyde 3-phosphate + pyruvate + H(+) = 1-deoxy-D-xylulose 5-phosphate + CO2. The protein operates within metabolic intermediate biosynthesis; 1-deoxy-D-xylulose 5-phosphate biosynthesis; 1-deoxy-D-xylulose 5-phosphate from D-glyceraldehyde 3-phosphate and pyruvate: step 1/1. Its function is as follows. Catalyzes the acyloin condensation reaction between C atoms 2 and 3 of pyruvate and glyceraldehyde 3-phosphate to yield 1-deoxy-D-xylulose-5-phosphate (DXP). The protein is 1-deoxy-D-xylulose-5-phosphate synthase of Citrobacter koseri (strain ATCC BAA-895 / CDC 4225-83 / SGSC4696).